A 322-amino-acid polypeptide reads, in one-letter code: Sulfate adenylyltransferase subunit 2 (322 aa).

Belongs to the PAPS reductase family. CysD subfamily. Heterodimer composed of CysD, the smaller subunit, and CysN.

The catalysed reaction is sulfate + ATP + H(+) = adenosine 5'-phosphosulfate + diphosphate. The protein operates within sulfur metabolism; hydrogen sulfide biosynthesis; sulfite from sulfate: step 1/3. With CysN forms the ATP sulfurylase (ATPS) that catalyzes the adenylation of sulfate producing adenosine 5'-phosphosulfate (APS) and diphosphate, the first enzymatic step in sulfur assimilation pathway. APS synthesis involves the formation of a high-energy phosphoric-sulfuric acid anhydride bond driven by GTP hydrolysis by CysN coupled to ATP hydrolysis by CysD. The polypeptide is Sulfate adenylyltransferase subunit 2 (Bradyrhizobium sp. (strain BTAi1 / ATCC BAA-1182)).